A 150-amino-acid chain; its full sequence is Macrodomain Ter protein (150 aa).

Belongs to the MatP family. In terms of assembly, homodimer.

The protein localises to the cytoplasm. Functionally, required for spatial organization of the terminus region of the chromosome (Ter macrodomain) during the cell cycle. Prevents early segregation of duplicated Ter macrodomains during cell division. Binds specifically to matS, which is a 13 bp signature motif repeated within the Ter macrodomain. This chain is Macrodomain Ter protein, found in Erwinia tasmaniensis (strain DSM 17950 / CFBP 7177 / CIP 109463 / NCPPB 4357 / Et1/99).